The chain runs to 203 residues: Ribosome maturation factor RimP (203 aa).

The tract at residues 179 to 203 (VSSEGEDGGEARQAPKLNPKKPGKK) is disordered.

The protein belongs to the RimP family.

Its subcellular location is the cytoplasm. Required for maturation of 30S ribosomal subunits. In Gluconobacter oxydans (strain 621H) (Gluconobacter suboxydans), this protein is Ribosome maturation factor RimP.